The sequence spans 398 residues: Phosphoglycerate kinase (398 aa).

Substrate contacts are provided by residues 21 to 23 (DFN), R36, 59 to 62 (HLGR), R119, and R157. Residues K208, G296, E327, and 354-357 (GGDS) contribute to the ATP site.

Belongs to the phosphoglycerate kinase family. In terms of assembly, monomer.

The protein localises to the cytoplasm. It carries out the reaction (2R)-3-phosphoglycerate + ATP = (2R)-3-phospho-glyceroyl phosphate + ADP. Its pathway is carbohydrate degradation; glycolysis; pyruvate from D-glyceraldehyde 3-phosphate: step 2/5. The polypeptide is Phosphoglycerate kinase (Streptococcus agalactiae serotype III (strain NEM316)).